A 192-amino-acid polypeptide reads, in one-letter code: MAVVKSSEIEKGSFLLIKGTPHIVLEREFSKTGRGGAIVRLKLKNLKNKFVIRETLKGADTAEAIEIYEVSAQYLYKDKDVLVFMDLETYDQVSLDLKESANFQDKVPFLQESETYALIMFDNVVIDIKLAPKIAFEVVEVEAAVKGDTVTNAMKNITLNTGLVVKAPLFINVGDKVLVNSETKEYAERIKS.

Belongs to the elongation factor P family.

Its subcellular location is the cytoplasm. Its pathway is protein biosynthesis; polypeptide chain elongation. In terms of biological role, involved in peptide bond synthesis. Stimulates efficient translation and peptide-bond synthesis on native or reconstituted 70S ribosomes in vitro. Probably functions indirectly by altering the affinity of the ribosome for aminoacyl-tRNA, thus increasing their reactivity as acceptors for peptidyl transferase. This Borrelia garinii subsp. bavariensis (strain ATCC BAA-2496 / DSM 23469 / PBi) (Borreliella bavariensis) protein is Elongation factor P.